A 270-amino-acid chain; its full sequence is MPELPEVETTRRGIAPHLVGQRVSRVVVRDRRLRWPIPEDLDVRLSGQCIVSVERRAKYLLINAEVGTLISHLGMSGNLRLVELGLPAAKHEHVDIELESGLMLRYTDPRRFGAMLWSLDPLNHELLIRLGPEPLTDLFDGERLFQLSRGRSMAVKPFIMDNAVVVGVGNIYATEALFAAGIDPRREAGGISRARYLKLAIEIKRVLAAAIEQGGTTLRDFIGGDGQPGYFQQELFVYGRGGQPCKVCGTELREVKLGQRASVFCPKCQR.

Residue Pro-2 is the Schiff-base intermediate with DNA of the active site. Glu-3 functions as the Proton donor in the catalytic mechanism. Lys-58 acts as the Proton donor; for beta-elimination activity in catalysis. 3 residues coordinate DNA: His-91, Arg-110, and Arg-151. The segment at 236–270 adopts an FPG-type zinc-finger fold; it reads FVYGRGGQPCKVCGTELREVKLGQRASVFCPKCQR. The Proton donor; for delta-elimination activity role is filled by Arg-260.

This sequence belongs to the FPG family. As to quaternary structure, monomer. It depends on Zn(2+) as a cofactor.

It carries out the reaction Hydrolysis of DNA containing ring-opened 7-methylguanine residues, releasing 2,6-diamino-4-hydroxy-5-(N-methyl)formamidopyrimidine.. The catalysed reaction is 2'-deoxyribonucleotide-(2'-deoxyribose 5'-phosphate)-2'-deoxyribonucleotide-DNA = a 3'-end 2'-deoxyribonucleotide-(2,3-dehydro-2,3-deoxyribose 5'-phosphate)-DNA + a 5'-end 5'-phospho-2'-deoxyribonucleoside-DNA + H(+). Involved in base excision repair of DNA damaged by oxidation or by mutagenic agents. Acts as a DNA glycosylase that recognizes and removes damaged bases. Has a preference for oxidized purines, such as 7,8-dihydro-8-oxoguanine (8-oxoG). Has AP (apurinic/apyrimidinic) lyase activity and introduces nicks in the DNA strand. Cleaves the DNA backbone by beta-delta elimination to generate a single-strand break at the site of the removed base with both 3'- and 5'-phosphates. The chain is Formamidopyrimidine-DNA glycosylase from Pseudomonas entomophila (strain L48).